Reading from the N-terminus, the 705-residue chain is Dolichyl-diphosphooligosaccharide--protein glycosyltransferase subunit STT3A (705 aa).

At 1–17 (MTKFGFLRLSYEKQDTL) the chain is on the cytoplasmic side. A helical membrane pass occupies residues 18-38 (LKLLILSMAAVLSFSTRLFAV). Residues 39–119 (LRFESVIHEF…IDIRNVCVFL (81 aa)) lie on the Lumenal side of the membrane. A DXD motif 1 motif is present at residues 47 to 49 (EFD). Asp-49 contacts Mn(2+). Residues 120 to 138 (APLFSSFTTIVTYHLTKEL) form a helical membrane-spanning segment. Over 139-140 (KD) the chain is Cytoplasmic. Residues 141 to 158 (AGAGLLAAAMIAVVPGYI) traverse the membrane as a helical segment. The Lumenal segment spans residues 159-169 (SRSVAGSYDNE). Mn(2+) contacts are provided by Asp-167 and Glu-169. A DXD motif 2 motif is present at residues 167–169 (DNE). The chain crosses the membrane as a helical span at residues 170 to 189 (GIAIFCMLLTYYMWIKAVKT). The Cytoplasmic portion of the chain corresponds to 190-191 (GS). Residues 192-206 (ICWAAKCALAYFYMV) traverse the membrane as a helical segment. The Lumenal segment spans residues 207-211 (SSWGG). The chain crosses the membrane as a helical span at residues 212 to 228 (YVFLINLIPLHVLVLML). Topologically, residues 229–233 (TGRFS) are cytoplasmic. A helical transmembrane segment spans residues 234-259 (HRIYVAYCTVYCLGTILSMQISFVGF). The Lumenal segment spans residues 260–267 (QPVLSSEH). Residues 268-287 (MAAFGVFGLCQIHAFVDYLR) form a helical membrane-spanning segment. The Cytoplasmic portion of the chain corresponds to 288 to 300 (SKLNPQQFEVLFR). Residues 301-321 (SVISLVGFVLLTVGALLMLTG) traverse the membrane as a helical segment. Over 322 to 356 (KISPWTGRFYSLLDPSYAKNNIPIIASVSEHQPTT) the chain is Lumenal. Residues 348-351 (SVSE) carry the SVSE motif motif. Residues 357–379 (WSSYYFDLQLLVFMFPVGLYYCF) traverse the membrane as a helical segment. Topologically, residues 380 to 385 (SNLSDA) are cytoplasmic. Residues 386 to 402 (RIFIIMYGVTSMYFSAV) traverse the membrane as a helical segment. Residues 403-406 (MVRL) are Lumenal-facing. Residue Arg-405 participates in dolichyl diphosphooligosaccharide binding. Residues 407–428 (MLVLAPVMCILSGIGVSQVLST) form a helical membrane-spanning segment. Over 429 to 453 (YMKNLDISRPDKKSKKQQDSTYPIK) the chain is Cytoplasmic. A helical membrane pass occupies residues 454–473 (NEVASGMILVMAFFLITYTF). Topologically, residues 474 to 705 (HSTWVTSEAY…DLDNRGLSRT (232 aa)) are lumenal. An interacts with target acceptor peptide in protein substrate region spans residues 525-527 (WWD). The WWDYG motif motif lies at 525 to 529 (WWDYG). Tyr-530 serves as a coordination point for dolichyl diphosphooligosaccharide. Asn-537 and Asn-544 each carry an N-linked (GlcNAc...) asparagine glycan. A glycan (N-linked (GlcNAc...) (high mannose) asparagine) is linked at Asn-548. The DK motif motif lies at 592–599 (DINKFLWM).

The protein belongs to the STT3 family. As to quaternary structure, component of the oligosaccharyltransferase (OST) complex. There are 2 OST complexes, OST-A and OST-B, which contain STT3A or STT3B as catalytic subunit, respectively. OST-A and OST-B contain common core subunits RPN1, RPN2, OST48, OST4, DAD1 and TMEM258, and OST-A contains DC2/OSTC and KRTCAP2/KCP2 specific accessory subunits. OST-A complex assembly occurs through the formation of 3 subcomplexes. Subcomplex 1 contains RPN1 and TMEM258, subcomplex 2 contains the OST-A-specific subunits STT3A, DC2/OSTC, and KCP2 as well as the core subunit OST4, and subcomplex 3 contains RPN2, DAD1, and OST48. The OST-A complex can form stable complexes with the Sec61 complex or with both the Sec61 and TRAP complexes. It depends on Mg(2+) as a cofactor. The cofactor is Mn(2+). In terms of tissue distribution, expressed at high levels in placenta, liver, muscle and pancreas, and at very low levels in brain, lung and kidney. Expressed in skin fibroblasts (at protein level).

The protein localises to the endoplasmic reticulum. Its subcellular location is the endoplasmic reticulum membrane. The enzyme catalyses a di-trans,poly-cis-dolichyl diphosphooligosaccharide + L-asparaginyl-[protein] = N(4)-(oligosaccharide-(1-&gt;4)-N-acetyl-beta-D-glucosaminyl-(1-&gt;4)-N-acetyl-beta-D-glucosaminyl)-L-asparaginyl-[protein] + a di-trans,poly-cis-dolichyl diphosphate + H(+). The protein operates within protein modification; protein glycosylation. Its activity is regulated as follows. STT3A, but not STT3B, is specifically inhibited by the N-glycosylation inhibitor NGI-235, which prevents productive binding pose of the glycan donor in the active site of STT3A. Its function is as follows. Catalytic subunit of the oligosaccharyl transferase (OST) complex that catalyzes the initial transfer of a defined glycan (Glc(3)Man(9)GlcNAc(2) in eukaryotes) from the lipid carrier dolichol-pyrophosphate to an asparagine residue within an Asn-X-Ser/Thr consensus motif in nascent polypeptide chains, the first step in protein N-glycosylation. N-glycosylation occurs cotranslationally and the complex associates with the Sec61 complex at the channel-forming translocon complex that mediates protein translocation across the endoplasmic reticulum (ER). All subunits are required for a maximal enzyme activity. This subunit contains the active site and the acceptor peptide and donor lipid-linked oligosaccharide (LLO) binding pockets. STT3A is present in the majority of OST complexes and mediates cotranslational N-glycosylation of most sites on target proteins, while STT3B-containing complexes are required for efficient post-translational glycosylation and mediate glycosylation of sites that have been skipped by STT3A. STT3A-containing OST-A complex is also required to prevent hyperglycosylation of some target proteins by preventing glycosylation of facultative sites before folding of target proteins is completed. This is Dolichyl-diphosphooligosaccharide--protein glycosyltransferase subunit STT3A from Homo sapiens (Human).